The chain runs to 226 residues: Uracil-DNA glycosylase (226 aa).

The Proton acceptor role is filled by Asp-65.

This sequence belongs to the uracil-DNA glycosylase (UDG) superfamily. UNG family.

It localises to the cytoplasm. It catalyses the reaction Hydrolyzes single-stranded DNA or mismatched double-stranded DNA and polynucleotides, releasing free uracil.. In terms of biological role, excises uracil residues from the DNA which can arise as a result of misincorporation of dUMP residues by DNA polymerase or due to deamination of cytosine. The sequence is that of Uracil-DNA glycosylase from Bacillus pumilus (strain SAFR-032).